Here is a 235-residue protein sequence, read N- to C-terminus: uncharacterized protein (235 aa).

The N-acetyltransferase domain occupies 82 to 221; the sequence is LAFKKFPPDP…DTGELIRESP (140 aa).

This sequence belongs to the acetyltransferase family.

It localises to the golgi apparatus membrane. The protein resides in the endoplasmic reticulum membrane. This is an uncharacterized protein from Schizosaccharomyces pombe (strain 972 / ATCC 24843) (Fission yeast).